Reading from the N-terminus, the 202-residue chain is Ion-translocating oxidoreductase complex subunit G (202 aa).

Residues 11-31 traverse the membrane as a helical segment; that stretch reads ACLMGFFSFFSLSSVIFVKNI. The residue at position 176 (T176) is an FMN phosphoryl threonine.

Belongs to the RnfG family. As to quaternary structure, the complex is composed of six subunits: RnfA, RnfB, RnfC, RnfD, RnfE and RnfG. It depends on FMN as a cofactor.

It is found in the cell inner membrane. Its function is as follows. Part of a membrane-bound complex that couples electron transfer with translocation of ions across the membrane. In Buchnera aphidicola subsp. Schizaphis graminum (strain Sg), this protein is Ion-translocating oxidoreductase complex subunit G.